A 180-amino-acid chain; its full sequence is Trichosurin (180 aa).

The first 15 residues, 1–15 (MKLLLLSMGLALVCG), serve as a signal peptide directing secretion. Residues Asn-67 and Asn-148 are each glycosylated (N-linked (GlcNAc...) asparagine). Cys-87 and Cys-180 are disulfide-bonded.

Belongs to the calycin superfamily. Lipocalin family. As to quaternary structure, homodimer. As to expression, milk.

It localises to the secreted. The chain is Trichosurin from Trichosurus vulpecula (Brush-tailed possum).